The primary structure comprises 312 residues: MRIIFAGTPPFAAAALEALADAGHEIALVLTQPDRPAGRGMKNASSAVKLLAQKRGFGLLQPPSLRQPELHMQLEAVRADIMVVAAYGLILPFSVLNIPKLGCVNIHASLLPRWRGAAPIERAILAGDRETGITIMQMDRGLDTGPILLVRSITIAKDDTAGTLHEKLGQLGAACIVEALALLQQGKIIATPQNDLAATYASKLEKTEAEIDWRMDAENIDRAVRAFNPRPGMHSTVNGISMKVWQTSVDIAETDEKPGEIVAIRPDGIVVACGKHALILKIVQKSGGKKLRSAEFLLGHSLHPHDRFESGE.

109-112 (SLLP) contacts (6S)-5,6,7,8-tetrahydrofolate.

This sequence belongs to the Fmt family.

The enzyme catalyses L-methionyl-tRNA(fMet) + (6R)-10-formyltetrahydrofolate = N-formyl-L-methionyl-tRNA(fMet) + (6S)-5,6,7,8-tetrahydrofolate + H(+). Its function is as follows. Attaches a formyl group to the free amino group of methionyl-tRNA(fMet). The formyl group appears to play a dual role in the initiator identity of N-formylmethionyl-tRNA by promoting its recognition by IF2 and preventing the misappropriation of this tRNA by the elongation apparatus. The polypeptide is Methionyl-tRNA formyltransferase (Nitrosospira multiformis (strain ATCC 25196 / NCIMB 11849 / C 71)).